The following is a 429-amino-acid chain: Dual-specificity RNA methyltransferase RlmN (429 aa).

The interval 1–23 (MRAMQTHTEIAPMPIPGHVDPVP) is disordered. The Proton acceptor role is filled by Glu128. Positions 134 to 397 (DADRGTLCVS…APVRTPRGRD (264 aa)) constitute a Radical SAM core domain. Cys141 and Cys402 form a disulfide bridge. [4Fe-4S] cluster contacts are provided by Cys148, Cys152, and Cys155. Residues 226 to 227 (GE), Ser258, 280 to 282 (SLH), and Asn359 each bind S-adenosyl-L-methionine. Cys402 (S-methylcysteine intermediate) is an active-site residue.

This sequence belongs to the radical SAM superfamily. RlmN family. [4Fe-4S] cluster serves as cofactor.

The protein resides in the cytoplasm. It carries out the reaction adenosine(2503) in 23S rRNA + 2 reduced [2Fe-2S]-[ferredoxin] + 2 S-adenosyl-L-methionine = 2-methyladenosine(2503) in 23S rRNA + 5'-deoxyadenosine + L-methionine + 2 oxidized [2Fe-2S]-[ferredoxin] + S-adenosyl-L-homocysteine. It catalyses the reaction adenosine(37) in tRNA + 2 reduced [2Fe-2S]-[ferredoxin] + 2 S-adenosyl-L-methionine = 2-methyladenosine(37) in tRNA + 5'-deoxyadenosine + L-methionine + 2 oxidized [2Fe-2S]-[ferredoxin] + S-adenosyl-L-homocysteine. Functionally, specifically methylates position 2 of adenine 2503 in 23S rRNA and position 2 of adenine 37 in tRNAs. m2A2503 modification seems to play a crucial role in the proofreading step occurring at the peptidyl transferase center and thus would serve to optimize ribosomal fidelity. The protein is Dual-specificity RNA methyltransferase RlmN of Novosphingobium aromaticivorans (strain ATCC 700278 / DSM 12444 / CCUG 56034 / CIP 105152 / NBRC 16084 / F199).